Here is a 269-residue protein sequence, read N- to C-terminus: Bis(5'-nucleosyl)-tetraphosphatase, symmetrical (269 aa).

It belongs to the Ap4A hydrolase family.

It catalyses the reaction P(1),P(4)-bis(5'-adenosyl) tetraphosphate + H2O = 2 ADP + 2 H(+). Functionally, hydrolyzes diadenosine 5',5'''-P1,P4-tetraphosphate to yield ADP. The protein is Bis(5'-nucleosyl)-tetraphosphatase, symmetrical of Vibrio vulnificus (strain YJ016).